Reading from the N-terminus, the 504-residue chain is WD repeat-containing protein 55 homolog (504 aa).

Disordered stretches follow at residues 1–21 (MDRH…DIDD) and 33–132 (QEVL…DDDD). Composition is skewed to acidic residues over residues 12 to 21 (NEDELDDIDD) and 33 to 48 (QEVL…EYDL). Positions 63 to 74 (SSSNESISSDGS) are enriched in low complexity. The span at 78-89 (NAEDSDSDDSMI) shows a compositional bias: acidic residues. WD repeat units lie at residues 156–195 (KLED…NKLL), 200–239 (VHAK…LKKL), 243–281 (AHDD…AIFE), 284–323 (EVED…LYVQ), 326–365 (PYEE…YHCD), and 410–449 (QHNM…DFGD). Residues 477–504 (FFADMTKDQDDDDNDGGNDTAAGPSNVT) form a disordered region.

The protein belongs to the WD repeat WDR55 family.

This is WD repeat-containing protein 55 homolog from Drosophila virilis (Fruit fly).